The sequence spans 392 residues: Formate-dependent phosphoribosylglycinamide formyltransferase (392 aa).

N(1)-(5-phospho-beta-D-ribosyl)glycinamide is bound by residues 22–23 (EL) and Glu82. ATP is bound by residues Arg114, Lys155, 160–165 (SSGKGQ), 195–198 (EGVV), and Glu203. The ATP-grasp domain occupies 119 to 308 (RLAAEELQLP…EFALHVRAFL (190 aa)). 2 residues coordinate Mg(2+): Glu267 and Glu279. Residues Asp286, Lys355, and 362–363 (RR) contribute to the N(1)-(5-phospho-beta-D-ribosyl)glycinamide site.

This sequence belongs to the PurK/PurT family. Homodimer.

The catalysed reaction is N(1)-(5-phospho-beta-D-ribosyl)glycinamide + formate + ATP = N(2)-formyl-N(1)-(5-phospho-beta-D-ribosyl)glycinamide + ADP + phosphate + H(+). Its pathway is purine metabolism; IMP biosynthesis via de novo pathway; N(2)-formyl-N(1)-(5-phospho-D-ribosyl)glycinamide from N(1)-(5-phospho-D-ribosyl)glycinamide (formate route): step 1/1. Functionally, involved in the de novo purine biosynthesis. Catalyzes the transfer of formate to 5-phospho-ribosyl-glycinamide (GAR), producing 5-phospho-ribosyl-N-formylglycinamide (FGAR). Formate is provided by PurU via hydrolysis of 10-formyl-tetrahydrofolate. This chain is Formate-dependent phosphoribosylglycinamide formyltransferase, found in Shigella boydii serotype 18 (strain CDC 3083-94 / BS512).